Here is a 548-residue protein sequence, read N- to C-terminus: Chaperonin GroEL (548 aa).

ATP is bound by residues threonine 30 to proline 33, lysine 51, aspartate 87 to threonine 91, glycine 415, asparagine 479 to alanine 481, and aspartate 495.

This sequence belongs to the chaperonin (HSP60) family. Forms a cylinder of 14 subunits composed of two heptameric rings stacked back-to-back. Interacts with the co-chaperonin GroES.

It is found in the cytoplasm. It carries out the reaction ATP + H2O + a folded polypeptide = ADP + phosphate + an unfolded polypeptide.. Together with its co-chaperonin GroES, plays an essential role in assisting protein folding. The GroEL-GroES system forms a nano-cage that allows encapsulation of the non-native substrate proteins and provides a physical environment optimized to promote and accelerate protein folding. In Klebsiella aerogenes (strain ATCC 13048 / DSM 30053 / CCUG 1429 / JCM 1235 / KCTC 2190 / NBRC 13534 / NCIMB 10102 / NCTC 10006 / CDC 819-56) (Enterobacter aerogenes), this protein is Chaperonin GroEL.